Reading from the N-terminus, the 229-residue chain is MAKKKAFIPFFYFTSIVFLPWLISLCCNKSLKTWITTWWNTRQCETFLNDIQEKSVLEKFIQLEDLFQLDEMIKEYPETDLQQFRLGIHKETIQFIKIHNEYRIHTILHFSTNLISFVILSGYSFWGKEKLFILNSWVQEFLYNLSDTIKAFSILLLTDLCIGFHSPHGWELMIGYIYKDFGFAHYEQILSGLVSTFPVILDTIFKYWIFRYLNRISPSLVVIYHAIND.

The next 3 membrane-spanning stretches (helical) occupy residues 6–26 (AFIPFFYFTSIVFLPWLISLC), 107–127 (ILHFSTNLISFVILSGYSFWG), and 189–209 (ILSGLVSTFPVILDTIFKYWI).

It belongs to the CemA family.

It is found in the plastid. Its subcellular location is the chloroplast inner membrane. It catalyses the reaction K(+)(in) + H(+)(out) = K(+)(out) + H(+)(in). Its function is as follows. Contributes to K(+)/H(+) antiport activity by supporting proton efflux to control proton extrusion and homeostasis in chloroplasts in a light-dependent manner to modulate photosynthesis. Prevents excessive induction of non-photochemical quenching (NPQ) under continuous-light conditions. Indirectly promotes efficient inorganic carbon uptake into chloroplasts. The chain is Potassium/proton antiporter CemA from Barbarea verna (Land cress).